Reading from the N-terminus, the 316-residue chain is L-lactate dehydrogenase (316 aa).

NAD(+) contacts are provided by residues Val-16, Asp-37, Lys-42, Tyr-68, and 82–83 (GA). Gln-85 and Arg-91 together coordinate substrate. Residues Ser-104, 121-123 (AAN), and Ser-146 each bind NAD(+). Residue 123–126 (NPVD) participates in substrate binding. 151 to 154 (DSAR) serves as a coordination point for substrate. Beta-D-fructose 1,6-bisphosphate contacts are provided by Arg-156 and His-171. His-178 acts as the Proton acceptor in catalysis. Tyr-222 is modified (phosphotyrosine). A substrate-binding site is contributed by Thr-231.

It belongs to the LDH/MDH superfamily. LDH family. In terms of assembly, homotetramer.

Its subcellular location is the cytoplasm. It carries out the reaction (S)-lactate + NAD(+) = pyruvate + NADH + H(+). The protein operates within fermentation; pyruvate fermentation to lactate; (S)-lactate from pyruvate: step 1/1. With respect to regulation, allosterically activated by fructose 1,6-bisphosphate (FBP). In terms of biological role, catalyzes the conversion of lactate to pyruvate. The chain is L-lactate dehydrogenase from Staphylococcus epidermidis (strain ATCC 12228 / FDA PCI 1200).